The chain runs to 472 residues: MVQSKAKAGFQAGVKDYRLTYYTPDYTPKDTDLLACFRVTPQPGVPPEEAGAAVAAESSTGTWTTVWTDGLTDLDRYKGRCYDIEPVPNEDNQYFCFVAYPLDLFEEGSVTNILTSIVGNVFGFKALRALRLEDIRFPVALLKTFQGPPHGITVERDKLNKYGRPLLGCTIKPKLGLSAKNYGRAVYECLRGGLDFTKDDENINSQPFMRWRDRFLFVQEAIEKSQAETNEIKGHYLNVTAGTLEEMMKRAEFAKEIKTPIIMHDYLTGGFTANTTLARWCRDNGVLLHIHRAMHAVIDRQKNHGIHFRVLAKCLRMSGGDHLHSGTVVGKLEGERGITMGFVDLMREDYVEEDRARGIFFTQDWASMPGVMPVASGGIHVWHMPALVEIFGDDSCLQFGGGTLGHPWGNAPGATANRVALEACIQARNEGRSLAREGNEVIREAARWSPELAAACELWKEIKFEFEAMDTL.

The substrate site is built by asparagine 120 and threonine 170. The active-site Proton acceptor is lysine 172. Lysine 174 is a binding site for substrate. Mg(2+) contacts are provided by lysine 198, aspartate 200, and glutamate 201. Lysine 198 carries the post-translational modification N6-carboxylysine. Histidine 291 (proton acceptor) is an active-site residue. Residues arginine 292, histidine 324, and serine 376 each contribute to the substrate site.

This sequence belongs to the RuBisCO large chain family. Type I subfamily. Heterohexadecamer of 8 large chains and 8 small chains. The cofactor is Mg(2+).

Its subcellular location is the carboxysome. The catalysed reaction is 2 (2R)-3-phosphoglycerate + 2 H(+) = D-ribulose 1,5-bisphosphate + CO2 + H2O. It carries out the reaction D-ribulose 1,5-bisphosphate + O2 = 2-phosphoglycolate + (2R)-3-phosphoglycerate + 2 H(+). Functionally, ruBisCO catalyzes two reactions: the carboxylation of D-ribulose 1,5-bisphosphate, the primary event in carbon dioxide fixation, as well as the oxidative fragmentation of the pentose substrate in the photorespiration process. Both reactions occur simultaneously and in competition at the same active site. The protein is Ribulose bisphosphate carboxylase large chain of Gloeothece citriformis (strain PCC 7424) (Cyanothece sp. (strain PCC 7424)).